Reading from the N-terminus, the 96-residue chain is Co-chaperonin GroES (96 aa).

Belongs to the GroES chaperonin family. Heptamer of 7 subunits arranged in a ring. Interacts with the chaperonin GroEL.

The protein localises to the cytoplasm. Functionally, together with the chaperonin GroEL, plays an essential role in assisting protein folding. The GroEL-GroES system forms a nano-cage that allows encapsulation of the non-native substrate proteins and provides a physical environment optimized to promote and accelerate protein folding. GroES binds to the apical surface of the GroEL ring, thereby capping the opening of the GroEL channel. The chain is Co-chaperonin GroES from Ralstonia nicotianae (strain ATCC BAA-1114 / GMI1000) (Ralstonia solanacearum).